The sequence spans 152 residues: Deoxyuridine 5'-triphosphate nucleotidohydrolase (152 aa).

Substrate contacts are provided by residues 71–73 (RSG), N84, 88–90 (LID), and M98.

It belongs to the dUTPase family. It depends on Mg(2+) as a cofactor.

The catalysed reaction is dUTP + H2O = dUMP + diphosphate + H(+). Its pathway is pyrimidine metabolism; dUMP biosynthesis; dUMP from dCTP (dUTP route): step 2/2. In terms of biological role, this enzyme is involved in nucleotide metabolism: it produces dUMP, the immediate precursor of thymidine nucleotides and it decreases the intracellular concentration of dUTP so that uracil cannot be incorporated into DNA. The sequence is that of Deoxyuridine 5'-triphosphate nucleotidohydrolase from Haemophilus ducreyi (strain 35000HP / ATCC 700724).